The sequence spans 634 residues: Chaperone protein DnaK (634 aa).

Threonine 193 is subject to Phosphothreonine; by autocatalysis. Positions 597-634 (GNANNTSSTESTTTNNNNEEDSKVVDSDYQEIDKKDGK) are disordered. Residues 600 to 613 (NNTSSTESTTTNNN) are compositionally biased toward low complexity. Residues 616 to 634 (EDSKVVDSDYQEIDKKDGK) show a composition bias toward basic and acidic residues.

It belongs to the heat shock protein 70 family.

Its function is as follows. Acts as a chaperone. The chain is Chaperone protein DnaK from Ehrlichia canis (strain Jake).